The chain runs to 160 residues: Serine-protein kinase RsbW (160 aa).

It belongs to the anti-sigma-factor family.

It carries out the reaction L-seryl-[protein] + ATP = O-phospho-L-seryl-[protein] + ADP + H(+). The catalysed reaction is L-threonyl-[protein] + ATP = O-phospho-L-threonyl-[protein] + ADP + H(+). In terms of biological role, negative regulator of sigma-B activity. Phosphorylates and inactivates its specific antagonist protein, RsbV. Upon phosphorylation of RsbV, RsbW is released and binds to sigma-B, thereby blocking its ability to form an RNA polymerase holoenzyme (E-sigma-B). The protein is Serine-protein kinase RsbW of Bacillus thuringiensis (strain Al Hakam).